Here is a 153-residue protein sequence, read N- to C-terminus: Ubiquitin/ISG15-conjugating enzyme E2 L6 (153 aa).

The UBC core domain occupies 2–149; the sequence is MASMRVVKEL…AEEFTLRFGV (148 aa). Cysteine 86 serves as the catalytic Glycyl thioester intermediate.

Belongs to the ubiquitin-conjugating enzyme family. As to quaternary structure, interacts with RNF19A, RNF19B and RNF144B. Interacts with FLT3 (tyrosine phosphorylated). Post-translationally, ISGylated. In terms of tissue distribution, present in natural killer cells (at protein level).

It carries out the reaction S-ubiquitinyl-[E1 ubiquitin-activating enzyme]-L-cysteine + [E2 ubiquitin-conjugating enzyme]-L-cysteine = [E1 ubiquitin-activating enzyme]-L-cysteine + S-ubiquitinyl-[E2 ubiquitin-conjugating enzyme]-L-cysteine.. It functions in the pathway protein modification; protein ubiquitination. Functionally, catalyzes the covalent attachment of ubiquitin or ISG15 to other proteins. Functions in the E6/E6-AP-induced ubiquitination of p53/TP53. Promotes ubiquitination and subsequent proteasomal degradation of FLT3. The chain is Ubiquitin/ISG15-conjugating enzyme E2 L6 (UBE2L6) from Homo sapiens (Human).